The chain runs to 242 residues: Probable proteasome subunit alpha type-7 (242 aa).

This sequence belongs to the peptidase T1A family. As to quaternary structure, the 26S proteasome consists of a 20S proteasome core and two 19S regulatory subunits. The 20S proteasome core is composed of 28 subunits that are arranged in four stacked rings, resulting in a barrel-shaped structure. The two end rings are each formed by seven alpha subunits, and the two central rings are each formed by seven beta subunits. The catalytic chamber with the active sites is on the inside of the barrel.

It localises to the cytoplasm. Its subcellular location is the nucleus. The proteasome degrades poly-ubiquitinated proteins in the cytoplasm and in the nucleus. It is essential for the regulated turnover of proteins and for the removal of misfolded proteins. The proteasome is a multicatalytic proteinase complex that is characterized by its ability to cleave peptides with Arg, Phe, Tyr, Leu, and Glu adjacent to the leaving group at neutral or slightly basic pH. It has an ATP-dependent proteolytic activity. This is Probable proteasome subunit alpha type-7 (PRE10) from Encephalitozoon cuniculi (strain GB-M1) (Microsporidian parasite).